Reading from the N-terminus, the 121-residue chain is Large ribosomal subunit protein uL22 (121 aa).

It belongs to the universal ribosomal protein uL22 family. As to quaternary structure, part of the 50S ribosomal subunit.

This protein binds specifically to 23S rRNA; its binding is stimulated by other ribosomal proteins, e.g. L4, L17, and L20. It is important during the early stages of 50S assembly. It makes multiple contacts with different domains of the 23S rRNA in the assembled 50S subunit and ribosome. Functionally, the globular domain of the protein is located near the polypeptide exit tunnel on the outside of the subunit, while an extended beta-hairpin is found that lines the wall of the exit tunnel in the center of the 70S ribosome. The sequence is that of Large ribosomal subunit protein uL22 from Synechococcus sp. (strain CC9311).